The chain runs to 291 residues: Quinol oxidase subunit 2 (291 aa).

An N-terminal signal peptide occupies residues 1–28; sequence MQLKKAFWKLASLLPLSLLLFLGGCDKK. 2 helical membrane-spanning segments follow: residues 49–69 and 91–111; these read SFLLMSLIIAIVFILFTVILI and LEIIWTLVPVIIVIALSIPTV.

The protein belongs to the cytochrome c oxidase subunit 2 family.

The protein resides in the cell membrane. The catalysed reaction is 2 a quinol + O2 = 2 a quinone + 2 H2O. Catalyzes quinol oxidation with the concomitant reduction of oxygen to water. Subunit II transfers the electrons from a quinol to the binuclear center of the catalytic subunit I. In Bacillus anthracis, this protein is Quinol oxidase subunit 2.